The sequence spans 68 residues: Conotoxin PnMLKM-011 (68 aa).

A signal peptide spans 1–17; the sequence is MGVVLFIFLVLFPLATL. A propeptide spanning residues 18–51 is cleaved from the precursor; it reads QLDPDQPVERYAENKQLLNPDERRGIILHALGQR. 3 cysteine pairs are disulfide-bonded: cysteine 53/cysteine 65, cysteine 54/cysteine 63, and cysteine 59/cysteine 66. At leucine 67 the chain carries Leucine amide.

The protein belongs to the conotoxin M superfamily. In terms of tissue distribution, expressed by the venom duct.

The protein resides in the secreted. The polypeptide is Conotoxin PnMLKM-011 (Conus pennaceus (Feathered cone)).